Here is a 237-residue protein sequence, read N- to C-terminus: uncharacterized protein (237 aa).

Residues 1-25 (MRHIFQRLLPRRLWLAGLPCLALLG) constitute a signal peptide (tat-type signal). The disordered stretch occupies residues 201-237 (IERQLSTRKPAGNFSPDTPHESEKPAPSTHEVTPDEP).

Post-translationally, exported by the Tat system. The position of the signal peptide cleavage has not been experimentally proven. Can also be exported by the Sec system.

This is an uncharacterized protein from Escherichia coli (strain K12).